Here is a 225-residue protein sequence, read N- to C-terminus: Phosphoglycolate phosphatase (225 aa).

D11 (nucleophile) is an active-site residue. Positions 11, 13, and 174 each coordinate Mg(2+).

The protein belongs to the HAD-like hydrolase superfamily. CbbY/CbbZ/Gph/YieH family. Mg(2+) is required as a cofactor.

It catalyses the reaction 2-phosphoglycolate + H2O = glycolate + phosphate. It participates in organic acid metabolism; glycolate biosynthesis; glycolate from 2-phosphoglycolate: step 1/1. Specifically catalyzes the dephosphorylation of 2-phosphoglycolate. Is involved in the dissimilation of the intracellular 2-phosphoglycolate formed during the DNA repair of 3'-phosphoglycolate ends, a major class of DNA lesions induced by oxidative stress. This chain is Phosphoglycolate phosphatase, found in Nitrosococcus oceani (strain ATCC 19707 / BCRC 17464 / JCM 30415 / NCIMB 11848 / C-107).